The following is a 296-amino-acid chain: Telomere repeat-binding factor 4 (296 aa).

Residues 1-62 (MGNQKLKWTA…WRNLSVAPGI (62 aa)) form the HTH myb-type domain. Residues 28-58 (WKNILRDPELAEQLSSRSNIDLKDKWRNLSV) constitute a DNA-binding region (H-T-H motif). One can recognise an H15 domain in the interval 126-200 (NAPRYDGMIF…STQNFYKMND (75 aa)). A disordered region spans residues 197–232 (KMNDNSLVQRTPHVARPKESNTKSRQQTNSQGPSIS). A compositionally biased stretch (polar residues) spans 219 to 232 (KSRQQTNSQGPSIS). Residues 245-282 (KLVEVENKLDVSKGAAEEIERLMKLAEEADEMLVIARE) are a coiled coil.

The protein belongs to the histone H1/H5 family. SMH subfamily.

It is found in the nucleus. Its subcellular location is the chromosome. Binds preferentially double-stranded telomeric repeats. The polypeptide is Telomere repeat-binding factor 4 (Arabidopsis thaliana (Mouse-ear cress)).